Reading from the N-terminus, the 601-residue chain is MKLTRDFPHNDTMAQWQPSDHKDAKVVGELFAHFGAEHFTVQTTRTGVPVVWLPRELLQDVVGFLRKLPAPFVMLYDLSATDERLRSHRDGLPQSDFTVFYHLISIDRNADVMLKVALAESDLHLPTITNHFPNANWYEREVWDLMGITFDGHPHLTRIMMPKSWQGHPLRKDYPARATEFDPFMLDAAKQDMEQENLLFKPEEWGLARGNENEDYMFLNLGPNHPSAHGAFRLVLQLDGEEVRNCVPDIGYHHRGAEKMGERQSWHSYIPYTDRVEYLGGVMNNLPYVLAVEKLAGIKVPQRVDMIRVMMAELFRIQSHLLFLGTYIQDVGAMTPVFFTFTDRQHIYTIIEAITGARMHPAWFRIGGVAHDLPKGWQRLVQDNLLSWLPKRLMDYEKAAMRNSILRGRTIGVAAYTTEQALAWGTTGAGLRATGLNFDVRKWRPYSGYEQFDFEVPVGSNGDAYDRATVRIEEIRQSMRIIEQCMNNMPEGPFKADHPLTTPPPKERTLQHIETLINHFLQVSWGPVMPAAESFQMIEATKGINSYYLTSDGSTMSYRTRIRTPSFAHLQQIPSVIKGSMVSDLIVYLGSIDFVMSDVDR.

Residues 1-191 (MKLTRDFPHN…DPFMLDAAKQ (191 aa)) are NADH dehydrogenase I subunit C. The NADH dehydrogenase I subunit D stretch occupies residues 215-601 (DYMFLNLGPN…IDFVMSDVDR (387 aa)).

It in the N-terminal section; belongs to the complex I 30 kDa subunit family. This sequence in the C-terminal section; belongs to the complex I 49 kDa subunit family. In terms of assembly, NDH-1 is composed of 13 different subunits. Subunits NuoB, CD, E, F, and G constitute the peripheral sector of the complex.

It localises to the cell inner membrane. The catalysed reaction is a quinone + NADH + 5 H(+)(in) = a quinol + NAD(+) + 4 H(+)(out). In terms of biological role, NDH-1 shuttles electrons from NADH, via FMN and iron-sulfur (Fe-S) centers, to quinones in the respiratory chain. The immediate electron acceptor for the enzyme in this species is believed to be ubiquinone. Couples the redox reaction to proton translocation (for every two electrons transferred, four hydrogen ions are translocated across the cytoplasmic membrane), and thus conserves the redox energy in a proton gradient. The chain is NADH-quinone oxidoreductase subunit C/D from Shewanella oneidensis (strain ATCC 700550 / JCM 31522 / CIP 106686 / LMG 19005 / NCIMB 14063 / MR-1).